We begin with the raw amino-acid sequence, 89 residues long: Gibberellin-regulated protein 10 (89 aa).

The N-terminal stretch at 1–25 (MKFPAVKVLIISLLITSSLFILSTA) is a signal peptide.

It belongs to the GASA family. Post-translationally, six disulfide bonds may be present. In terms of tissue distribution, expressed in vasculature of rosette leaves and roots, cotyledon and root tips and developing seeds.

It localises to the secreted. Its function is as follows. Gibberellin-regulated protein that may function in hormonal controlled steps of development such as seed germination, flowering and seed maturation. The polypeptide is Gibberellin-regulated protein 10 (GASA10) (Arabidopsis thaliana (Mouse-ear cress)).